We begin with the raw amino-acid sequence, 428 residues long: Ammonium transporter AmtB (428 aa).

An N-terminal signal peptide occupies residues 1-22 (MKIATIKTGLASLAMLPGLVMA). At 23–32 (APAVADKADN) the chain is on the periplasmic side. Residues 33–54 (AFMMICTALVLFMTIPGIALFY) traverse the membrane as a helical segment. Over 55–65 (GGLIRGKNVLS) the chain is Cytoplasmic. The helical transmembrane segment at 66-90 (MLTQVTVTFALVCILWVVYGYSLAF) threads the bilayer. The Periplasmic segment spans residues 91–119 (GEGNNFFGNINWLMLKNIELTAVMGSIYQ). Residues 120 to 142 (YIHVAFQGSFACITVGLIVGALA) traverse the membrane as a helical segment. Residues 143–146 (ERIR) are Cytoplasmic-facing. Residues 147-171 (FSAVLIFVVVWLTLSYIPIAHMVWG) traverse the membrane as a helical segment. Residues 172–185 (GGLLASHGALDFAG) are Periplasmic-facing. A helical transmembrane segment spans residues 186-201 (GTVVHINAAIAGLVGA). Residues 202 to 221 (YLIGKRVGFGKEAFKPHNLP) lie on the Cytoplasmic side of the membrane. Residues 222 to 241 (MVFTGTAILYIGWFGFNAGS) traverse the membrane as a helical segment. Serine 241 serves as a coordination point for NH4(+). The Periplasmic portion of the chain corresponds to 242–248 (AGTANEI). The chain crosses the membrane as a helical span at residues 249–273 (AALAFVNTVVATAAAILGWIFGEWA). At 274–279 (LRGKPS) the chain is on the cytoplasmic side. The chain crosses the membrane as a helical span at residues 280 to 300 (LLGACSGAIAGLVGVTPACGY). Over 301 to 302 (IG) the chain is Periplasmic. Residues 303 to 321 (VGGALIIGVVAGLAGLWGV) form a helical membrane-spanning segment. Topologically, residues 322 to 333 (TMLKRLLRVDDP) are cytoplasmic. A helical transmembrane segment spans residues 334–355 (CDVFGVHGVCGIVGCIMTGIFA). Over 356-370 (ASSLGGVGFAEGVTM) the chain is Periplasmic. Residues 371–399 (GHQLLVQLESIAITIVWSGVVAFIGYKLA) traverse the membrane as a helical segment. The Cytoplasmic portion of the chain corresponds to 400–428 (DLTVGLRVPEEQEREGLDVNSHGENAYNA).

The protein belongs to the ammonia transporter channel (TC 1.A.11.2) family. Homotrimer. In response to elevation of the extracellular ammonium concentration, interacts and forms a complex with GlnK.

Its subcellular location is the cell inner membrane. Its activity is regulated as follows. In the presence of high extracellular ammonium concentrations, transport activity is inhibited by interaction with the regulatory protein GlnK. Formation of the GlnK-AmtB complex is influenced by intracellular pools of the effector molecules ATP, ADP, Mg(2+) and 2-oxoglutarate. The GlnK-AmtB interaction is also controlled by the level of intracellular glutamine and the uridylylation status of GlnK. Functionally, involved in the uptake of ammonium/ammonia (NH(4)(+)/NH(3)). Transport is electrogenic. Following sequestration of NH(4)(+) at the periplasmic face, NH(4)(+) is deprotonated and neutral NH(3) is transported into the cytoplasm. Neutral NH(3) and charged H(+) are carried separately across the membrane on a unique two-lane pathway, before recombining to NH(4)(+) inside the cell. The chain is Ammonium transporter AmtB (amtB) from Escherichia coli O157:H7.